The primary structure comprises 290 residues: L-proline cis-3-hydroxylase 2 (290 aa).

Fe cation is bound by residues H107, D109, and H158. R168 contributes to the 2-oxoglutarate binding site.

The protein belongs to the L-proline cis-4-/cis-3-hydroxylase family. As to quaternary structure, homodimer. Requires Fe(2+) as cofactor.

It catalyses the reaction L-proline + 2-oxoglutarate + O2 = cis-3-hydroxy-L-proline + succinate + CO2. Inhibited by metal ions such as Co(2+), Zn(2+), Ni(2+) or Cu(2+). Is also inhibited by EDTA in vitro. Its function is as follows. Dioxygenase that catalyzes the 2-oxoglutarate-dependent selective hydroxylation of free L-proline to cis-3-hydroxy-L-proline (cis-3-Hyp). The chain is L-proline cis-3-hydroxylase 2 from Streptomyces sp.